The chain runs to 393 residues: Homogentisate phytyltransferase 1, chloroplastic (393 aa).

The transit peptide at 1 to 36 directs the protein to the chloroplast; sequence MESLLSSSSLVSAAGGFCWKKQNLKLHSLSEIRVLR. 9 helical membrane passes run 108 to 128, 133 to 153, 170 to 190, 205 to 227, 232 to 252, 271 to 291, 314 to 334, 338 to 358, and 371 to 391; these read TVIG…EKVS, LLFT…IYIV, YLPL…VASF, PLFW…LPLL, FALV…QIAF, LIFA…FKDI, VFWT…LVGA, FIWS…TLWA, and ITSC…LLPF.

Belongs to the UbiA prenyltransferase family.

Its subcellular location is the plastid. It is found in the chloroplast membrane. It carries out the reaction phytyl diphosphate + homogentisate + H(+) = 2-methyl-6-phytyl-1,4-benzene-1,4-diol + CO2 + diphosphate. It participates in cofactor biosynthesis; tocopherol biosynthesis. Its function is as follows. Involved in the synthesis of tocopherol (vitamin E). Catalyzes the condensation of homogentisate and phytyl diphosphate to form dimethylphytylhydrquinone. Low activity with geranylgeranyl diphosphate as substrate, but no activity with farnesyl diphosphate or solanesyl diphosphate. Tocopherol functions to limit lipid oxidation during seed desiccation, quiescence and germination and early seedling development. Protects thylakoid membrane lipids from photooxidation and is required for low-temperature adaptation. The sequence is that of Homogentisate phytyltransferase 1, chloroplastic (HPT1) from Arabidopsis thaliana (Mouse-ear cress).